The sequence spans 118 residues: Basic phospholipase A2 2 (118 aa).

Disulfide bonds link Cys11–Cys71, Cys27–Cys117, Cys29–Cys45, Cys44–Cys98, Cys51–Cys91, Cys60–Cys84, and Cys78–Cys89. Ca(2+) is bound by residues Tyr28, Gly30, and Gly32. His48 is a catalytic residue. Asp49 provides a ligand contact to Ca(2+). Asp92 is an active-site residue.

This sequence belongs to the phospholipase A2 family. Group I subfamily. D49 sub-subfamily. Ca(2+) serves as cofactor. As to expression, expressed by the venom gland.

Its subcellular location is the secreted. It catalyses the reaction a 1,2-diacyl-sn-glycero-3-phosphocholine + H2O = a 1-acyl-sn-glycero-3-phosphocholine + a fatty acid + H(+). Its function is as follows. Snake venom phospholipase A2 (PLA2) that inhibits neuromuscular transmission by blocking acetylcholine release from the nerve termini. PLA2 catalyzes the calcium-dependent hydrolysis of the 2-acyl groups in 3-sn-phosphoglycerides. This Laticauda colubrina (Yellow-lipped sea krait) protein is Basic phospholipase A2 2.